We begin with the raw amino-acid sequence, 194 residues long: Adenylate kinase (194 aa).

Residue 8 to 16 (GIPGVGKTT) coordinates ATP.

It belongs to the archaeal adenylate kinase family.

It is found in the cytoplasm. The enzyme catalyses AMP + ATP = 2 ADP. The chain is Adenylate kinase (adkA) from Sulfurisphaera tokodaii (strain DSM 16993 / JCM 10545 / NBRC 100140 / 7) (Sulfolobus tokodaii).